We begin with the raw amino-acid sequence, 625 residues long: Chaperone protein DnaK (625 aa).

At T197 the chain carries Phosphothreonine; by autocatalysis. The tract at residues 598–625 is disordered; it reads MYKKDDNASGEQSGGKKKDDDVIDAEVE.

The protein belongs to the heat shock protein 70 family.

In terms of biological role, acts as a chaperone. This Campylobacter curvus (strain 525.92) protein is Chaperone protein DnaK.